A 397-amino-acid polypeptide reads, in one-letter code: MAKEKFDRSLPHVNVGTIGHVDHGKTTLTAALTRVCSEVFGSAIVDFDKIDSAPEEKARGITINTAHVEYNSLIRHYAHVDCPGHADYVKNMITGAAQMDGAILVCSAADGPMPQTREHILLSRQVGVPYIVVYLNKADLVDDAELLELVEMEVRDLLSTYDFPGDDTPIIIGSARMALEGKDDNEMGTTSVRKLVETLDSYIPDPVRVIDKPFLMPIEDVFSISGRGTVVTGRIERGIVKVQDPLEIVGLRDTTVTTCTGVEMFRKLLDEGRAGENCGVLLRGTKRDDVERGQVLVKPGSVKPHTKFEAEVYVLSKEEGGRHTPFFKGYRPQFYFRTTDVTGNCELPEGVEMVMPGDNIKMVVTLIKTIAMEDGLRFAIREGGRTVGAGVVAKIIE.

The 198-residue stretch at 10–207 folds into the tr-type G domain; sequence LPHVNVGTIG…TLDSYIPDPV (198 aa). The tract at residues 19–26 is G1; sequence GHVDHGKT. Residue 19 to 26 participates in GTP binding; the sequence is GHVDHGKT. Thr-26 contributes to the Mg(2+) binding site. Residues 60 to 64 are G2; that stretch reads GITIN. Residues 81-84 form a G3 region; the sequence is DCPG. GTP contacts are provided by residues 81–85 and 136–139; these read DCPGH and NKAD. The segment at 136 to 139 is G4; the sequence is NKAD. The segment at 174 to 176 is G5; that stretch reads SAR.

It belongs to the TRAFAC class translation factor GTPase superfamily. Classic translation factor GTPase family. EF-Tu/EF-1A subfamily. As to quaternary structure, monomer.

The protein resides in the cytoplasm. It catalyses the reaction GTP + H2O = GDP + phosphate + H(+). Its function is as follows. GTP hydrolase that promotes the GTP-dependent binding of aminoacyl-tRNA to the A-site of ribosomes during protein biosynthesis. This is Elongation factor Tu from Pseudomonas fluorescens (strain SBW25).